The sequence spans 213 residues: Kynurenine formamidase (213 aa).

W18 provides a ligand contact to substrate. 3 residues coordinate Zn(2+): H48, H52, and D54. H58 acts as the Proton donor/acceptor in catalysis. Positions 160 and 172 each coordinate Zn(2+).

The protein belongs to the Cyclase 1 superfamily. KynB family. As to quaternary structure, homodimer. Zn(2+) is required as a cofactor.

The catalysed reaction is N-formyl-L-kynurenine + H2O = L-kynurenine + formate + H(+). It participates in amino-acid degradation; L-tryptophan degradation via kynurenine pathway; L-kynurenine from L-tryptophan: step 2/2. Its function is as follows. Catalyzes the hydrolysis of N-formyl-L-kynurenine to L-kynurenine, the second step in the kynurenine pathway of tryptophan degradation. The sequence is that of Kynurenine formamidase from Burkholderia ambifaria (strain ATCC BAA-244 / DSM 16087 / CCUG 44356 / LMG 19182 / AMMD) (Burkholderia cepacia (strain AMMD)).